Reading from the N-terminus, the 418-residue chain is UDP-N-acetylglucosamine 1-carboxyvinyltransferase (418 aa).

22 to 23 (KN) provides a ligand contact to phosphoenolpyruvate. Arginine 92 contributes to the UDP-N-acetyl-alpha-D-glucosamine binding site. Cysteine 116 functions as the Proton donor in the catalytic mechanism. Cysteine 116 carries the 2-(S-cysteinyl)pyruvic acid O-phosphothioketal modification. UDP-N-acetyl-alpha-D-glucosamine-binding positions include 121–125 (RPIDL), aspartate 305, and leucine 327.

It belongs to the EPSP synthase family. MurA subfamily.

It is found in the cytoplasm. The catalysed reaction is phosphoenolpyruvate + UDP-N-acetyl-alpha-D-glucosamine = UDP-N-acetyl-3-O-(1-carboxyvinyl)-alpha-D-glucosamine + phosphate. The protein operates within cell wall biogenesis; peptidoglycan biosynthesis. In terms of biological role, cell wall formation. Adds enolpyruvyl to UDP-N-acetylglucosamine. This Campylobacter jejuni subsp. jejuni serotype O:6 (strain 81116 / NCTC 11828) protein is UDP-N-acetylglucosamine 1-carboxyvinyltransferase.